The following is a 606-amino-acid chain: NADH-ubiquinone oxidoreductase chain 5 (606 aa).

The next 16 helical transmembrane spans lie at 1 to 21 (MNIFPSLMLTSLFTLTLPIIA), 38 to 58 (NIISFAFIISLIPTMMFIYSG), 87 to 107 (MIFVPVALFVTWSIMEFSIWY), 114 to 134 (ITQFFKYLLMFLITMMILVTA), 140 to 160 (LFIGWEGVGIMSFLLIGWWYG), 171 to 191 (AILYNRIGDIGFIMSMAWFLS), 213 to 233 (LMGLLLAATGKSAQFGLHPWL), 241 to 261 (TPVSALLHSSTMVVAGVFLLI), 273 to 293 (AQTLTLCLGAITTLFTAICAL), 301 to 320 (IIAFSTSSQLGLMIVTIGIN), 325 to 347 (AFLHICTHAFFKAMLFMCSGSII), 366 to 386 (MPFTATSLIIGSFALTGMPFL), 409 to 429 (LLMTLIATSLTAAYSTRMIFF), 457 to 477 (LLIGSIFAGFFISNNIYPTTT), 488 to 508 (LMALIVTILGFALALELSLAT), and 582 to 602 (GLIKLYFLSFLITLTLSLLLL).

The protein belongs to the complex I subunit 5 family. As to quaternary structure, core subunit of respiratory chain NADH dehydrogenase (Complex I) which is composed of 45 different subunits.

Its subcellular location is the mitochondrion inner membrane. It carries out the reaction a ubiquinone + NADH + 5 H(+)(in) = a ubiquinol + NAD(+) + 4 H(+)(out). Functionally, core subunit of the mitochondrial membrane respiratory chain NADH dehydrogenase (Complex I) which catalyzes electron transfer from NADH through the respiratory chain, using ubiquinone as an electron acceptor. Essential for the catalytic activity and assembly of complex I. The polypeptide is NADH-ubiquinone oxidoreductase chain 5 (MT-ND5) (Rhinoceros unicornis (Greater Indian rhinoceros)).